A 673-amino-acid chain; its full sequence is DNA ligase (673 aa).

NAD(+)-binding positions include 33 to 37 (DYEYD), 82 to 83 (SL), and glutamate 113. Residue lysine 115 is the N6-AMP-lysine intermediate of the active site. NAD(+) contacts are provided by arginine 136, glutamate 170, lysine 285, and lysine 309. The Zn(2+) site is built by cysteine 403, cysteine 406, cysteine 421, and cysteine 426. A BRCT domain is found at 583 to 672 (AKSDILKGYT…SREEAEKILM (90 aa)).

It belongs to the NAD-dependent DNA ligase family. LigA subfamily. Mg(2+) is required as a cofactor. It depends on Mn(2+) as a cofactor.

It catalyses the reaction NAD(+) + (deoxyribonucleotide)n-3'-hydroxyl + 5'-phospho-(deoxyribonucleotide)m = (deoxyribonucleotide)n+m + AMP + beta-nicotinamide D-nucleotide.. Its function is as follows. DNA ligase that catalyzes the formation of phosphodiester linkages between 5'-phosphoryl and 3'-hydroxyl groups in double-stranded DNA using NAD as a coenzyme and as the energy source for the reaction. It is essential for DNA replication and repair of damaged DNA. This is DNA ligase from Caldicellulosiruptor bescii (strain ATCC BAA-1888 / DSM 6725 / KCTC 15123 / Z-1320) (Anaerocellum thermophilum).